The following is a 76-amino-acid chain: Peptide ARACIN 1 (76 aa).

Positions 1-22 (MAMKTSHVLLLCLMFVIGFVEA) are cleaved as a signal peptide. A propeptide spans 23-35 (RRSDTGPDISTPP) (removed in mature form). A SxS motif essential for MIK2 binding motif is present at residues 36–38 (SGS). The SCOOP motif motif lies at 36–49 (SGSCGASIAEFNSS). The disordered stretch occupies residues 56–76 (APPCRRPRLQNSEDVTHTTLP). Polar residues predominate over residues 64–76 (LQNSEDVTHTTLP).

It belongs to the serine rich endogenous peptide (SCOOP) phytocytokine family. As to quaternary structure, interacts with MIK2 (via extracellular leucine-rich repeat domain); this interaction triggers the formation of complex between MIK2 and the BAK1/SERK3 and SERK4 coreceptors, and subsequent BAK1 activation by phosphorylation. In terms of tissue distribution, mainly expressed in young developing leaves, hydathodes, immature flowers and elongating pollen tubes.

Its subcellular location is the cell membrane. It is found in the secreted. It localises to the extracellular space. The protein resides in the apoplast. The protein localises to the endoplasmic reticulum. Brassicaceae-specific phytocytokine (plant endogenous peptide released into the apoplast) perceived by MIK2 in a BAK1/SERK3 and SERK4 coreceptors-dependent manner, that modulates various physiological and antimicrobial processes including growth prevention and reactive oxygen species (ROS) response regulation. Inhibits the fungal growth of Alternaria brassicicola, Sclerotinia sclerotiorum, Fusarium graminearum, yeast (Saccharomyces) and Botrytis cinerea, thus being an antimicrobial peptide (AMP). Promotes resistance to A.brassicicola and B.cinerea. This Arabidopsis thaliana (Mouse-ear cress) protein is Peptide ARACIN 1.